A 305-amino-acid polypeptide reads, in one-letter code: Ubiquinone biosynthesis protein COQ4 homolog, mitochondrial (305 aa).

Zn(2+) contacts are provided by H150, D151, H154, and E166.

It belongs to the COQ4 family. Component of a multi-subunit COQ enzyme complex. Zn(2+) serves as cofactor.

The protein localises to the mitochondrion inner membrane. It catalyses the reaction a 4-hydroxy-3-methoxy-5-(all-trans-polyprenyl)benzoate + H(+) = a 2-methoxy-6-(all-trans-polyprenyl)phenol + CO2. It participates in cofactor biosynthesis; ubiquinone biosynthesis. Functionally, lyase that catalyzes the C1-decarboxylation of 4-hydroxy-3-methoxy-5-(all-trans-polyprenyl)benzoic acid into 2-methoxy-6-(all-trans-polyprenyl)phenol during ubiquinone biosynthesis. The chain is Ubiquinone biosynthesis protein COQ4 homolog, mitochondrial from Cryptosporidium parvum (strain Iowa II).